An 862-amino-acid chain; its full sequence is Active breakpoint cluster region-related protein (862 aa).

Positions 30–84 (DAEGNEEHKSSREGSETMPYIDESPTMSPQLSARSQDSVDGVSPTPTEVLLPGGE) are disordered. Positions 34–44 (NEEHKSSREGS) are enriched in basic and acidic residues. Residues 54–67 (PTMSPQLSARSQDS) are compositionally biased toward polar residues. The region spanning 93-286 (MRKLVLSGVL…QNFLSSINED (194 aa)) is the DH domain. In terms of domain architecture, PH spans 303–462 (QLVKDGFLVE…WREAIQKLQK (160 aa)). The region spanning 488 to 616 (VHNVPIISHK…QSKNWHDDVI (129 aa)) is the C2 domain. The Rho-GAP domain occupies 650–848 (VKISVVTKRE…YYLQHPPISF (199 aa)).

The protein localises to the cell projection. Its subcellular location is the dendritic spine. It localises to the axon. It is found in the synapse. In terms of biological role, protein with a unique structure having two opposing regulatory activities toward small GTP-binding proteins. The C-terminus is a GTPase-activating protein domain which stimulates GTP hydrolysis by RAC1, RAC2 and CDC42. Accelerates the intrinsic rate of GTP hydrolysis of RAC1 or CDC42, leading to down-regulation of the active GTP-bound form. The central Dbl homology (DH) domain functions as guanine nucleotide exchange factor (GEF) that modulates the GTPases CDC42, RHOA and RAC1. Promotes the conversion of CDC42, RHOA and RAC1 from the GDP-bound to the GTP-bound form. This is Active breakpoint cluster region-related protein (abr) from Xenopus tropicalis (Western clawed frog).